A 124-amino-acid polypeptide reads, in one-letter code: Small ribosomal subunit protein uS12 (124 aa).

The segment at 1 to 24 (MPTISQLVRKGRAKITKKSKSAAL) is disordered. Over residues 9 to 20 (RKGRAKITKKSK) the composition is skewed to basic residues. Position 89 is a 3-methylthioaspartic acid (Asp89). Positions 105 to 124 (AGVEGRTQRRSKYGAKRPKK) are disordered. Over residues 112–124 (QRRSKYGAKRPKK) the composition is skewed to basic residues.

This sequence belongs to the universal ribosomal protein uS12 family. Part of the 30S ribosomal subunit. Contacts proteins S8 and S17. May interact with IF1 in the 30S initiation complex.

With S4 and S5 plays an important role in translational accuracy. Functionally, interacts with and stabilizes bases of the 16S rRNA that are involved in tRNA selection in the A site and with the mRNA backbone. Located at the interface of the 30S and 50S subunits, it traverses the body of the 30S subunit contacting proteins on the other side and probably holding the rRNA structure together. The combined cluster of proteins S8, S12 and S17 appears to hold together the shoulder and platform of the 30S subunit. This Christiangramia forsetii (strain DSM 17595 / CGMCC 1.15422 / KT0803) (Gramella forsetii) protein is Small ribosomal subunit protein uS12.